Reading from the N-terminus, the 359-residue chain is MAAMRAHARRRHPHALMSRAAGLPRLSWFAGLTWFAGGSTGAGCAAHPALAGLTAGARCPAYAAISASTARPAATAGTTPATGASGSARPTDAAGMADLARPGVVATHAVRTLGTTGSRAIGLCPCQPLDCPRSPQATLNLGSMGRSLDGPQWRRARVRLCGRWWRRSNTTRGASPRPPSTCRGDNVSMIELEVHQADVTKLELDAITNAANTRLRHAGGVAAAIARAGGPELQRESTEKAPIGLGEAVETTAGDMPARYVIHAATMELGGPTSGEIITAATAATLRKADELGCRSLALVAFGTGVGGFPLDDAARLMVGAVRRHRPGSLQRVVFAVHGDAAERAFSAAIQAGEDTARR.

The segment covering 73–88 (AATAGTTPATGASGSA) has biased composition (low complexity). The disordered stretch occupies residues 73–93 (AATAGTTPATGASGSARPTDA). Residues 179 to 354 (PSTCRGDNVS…AFSAAIQAGE (176 aa)) form the Macro domain.

This is an uncharacterized protein from Mycobacterium tuberculosis (strain ATCC 25618 / H37Rv).